Consider the following 2299-residue polypeptide: Acetyl-CoA carboxylase dmxL1 (2299 aa).

Low complexity predominate over residues 21 to 39; the sequence is TSIPASVPASAPPSSSAPH. The disordered stretch occupies residues 21 to 41; it reads TSIPASVPASAPPSSSAPHAA. The Biotin carboxylation domain maps to 75 to 583; the sequence is VITNVLIANN…TTGWLDELIT (509 aa). In terms of domain architecture, ATP-grasp 1 spans 227 to 424; it reads QVAIDADGIV…LPAAQLQIAM (198 aa). 258–315 contacts ATP; the sequence is AKEIGFPVMIKASEGGGGKGIRKCEQEEGFEALYNAASSEIPGSPIFIMKLAGNARHL. Mg(2+) is bound by residues E381, E395, and N397. E381, E395, and N397 together coordinate Mn(2+). The region spanning 710 to 784 is the Biotinyl-binding domain; sequence LEQENDPTQL…EPGDVLGILT (75 aa). An N6-biotinyllysine modification is found at K751. A disordered region spans residues 1159–1208; it reads DMEMSSQLSTPSTPATPPTPPYENGKQSKGVGSISDMSNLIENPDKEPTR. The region spanning 1539-1887 is the CoA carboxyltransferase N-terminal domain; it reads PTKALEWLQP…KKNTLVPIGP (349 aa). Residues 1891-2205 enclose the CoA carboxyltransferase C-terminal domain; it reads PWDRDIVCSP…EEHILKRIAT (315 aa).

Biotin serves as cofactor. It depends on Mg(2+) as a cofactor. The cofactor is Mn(2+).

The enzyme catalyses hydrogencarbonate + acetyl-CoA + ATP = malonyl-CoA + ADP + phosphate + H(+). It carries out the reaction N(6)-biotinyl-L-lysyl-[protein] + hydrogencarbonate + ATP = N(6)-carboxybiotinyl-L-lysyl-[protein] + ADP + phosphate + H(+). It participates in secondary metabolite biosynthesis. Its pathway is lipid metabolism; malonyl-CoA biosynthesis; malonyl-CoA from acetyl-CoA: step 1/1. In terms of biological role, acetyl-CoA carboxylase; part of the gene cluster that mediates the biosynthesis of the dimeric xanthones cryptosporioptides. The pathway begins with the synthesis of atrochrysone thioester by the polyketide synthase dmx-nrPKS. The atrochrysone carboxyl ACP thioesterase dmxR1 then breaks the thioester bond and releases the atrochrysone carboxylic acid from dmx-nrPKS. Atrochrysone carboxylic acid is decarboxylated by the decarboxylase dmxR15, and oxidized by the anthrone oxygenase dmxR16 to yield emodin. Emodin is then reduced to emodin hydroquinone by the oxidoreductase dmxR7. A-ring reduction by the short chain dehydrogenase dmxR18, dehydration by the scytalone dehydratase-like protein dmxR17 and probable spontaneous re-oxidation, results in overall deoxygenation to chrysophanol. Baeyer-Villiger oxidation by the Baeyer-Villiger monooxygenase (BVMO) dmxR6 then yields monodictylactone in equilibrium with monodictyphenone. In the case of the cryptosporioptides biosynthesis, monodictylactone is reduced at C-12 to an alcohol (by the short chain dehydrogenases dmxR12 or dmxR8) and hydroxylated at C-5 by dmxR9, yielding the electron-rich aromatic which could eliminate H(2)O to form the ortho-quinonemethide, followed by tautomerisation to paraquinone and complete the formal reduction to produce the 10-methylgroup. Conjugate addition of C-4a-OH to the resulting paraquinone by the monooxygenase dmxR10 then gives cyclohexadienone, which is then reduced at C-5 by the short chain dehydrogenase dmxR3 to give the dihydroxanthone. The 6,7-epoxide in the cryptosporioptides could be introduced by the cytochrome P450 monooxygenase dmxL3. The highly reducing PKS dmxL2 manufactures butyrate, which is further carboxylated by dmxL1 to form ethylmalonate. It is not yet clear whether the carboxylation occurs while the butyrate is attached to the ACP of dmxL2, but this unusual fungal metabolite could then be esterified to O-5 by the O-acetyltransferase dmxR13. Finally, dimerization performed by dmxR5 gives the observed dimers cryptosporioptides A, B and C as the final products of the pathway. The chain is Acetyl-CoA carboxylase dmxL1 from Cryptosporiopsis sp. (strain 8999).